An 808-amino-acid chain; its full sequence is Quinoprotein glucose dehydrogenase (808 aa).

The first 33 residues, 1-33 (MSTTSRPGLWALITAAVFALCGAILTVGGAWVA), serve as a signal peptide directing secretion. A run of 4 helical transmembrane segments spans residues 35–54 (IGGP…TAFL), 59–76 (NPAA…TVIW), 94–108 (IVII…PFVS), and 123–138 (GAVG…SLFT). Catalysis depends on Asp470, which acts as the Proton acceptor. The segment at 514–545 (VPAPETPVPQGAAPGDHTSPTQPMSQLTLRPK) is disordered. The span at 531-541 (TSPTQPMSQLT) shows a compositional bias: polar residues.

This sequence belongs to the bacterial PQQ dehydrogenase family. Pyrroloquinoline quinone serves as cofactor.

It localises to the cell inner membrane. It carries out the reaction a ubiquinone + D-glucose = D-glucono-1,5-lactone + a ubiquinol. The protein is Quinoprotein glucose dehydrogenase (gdh) of Gluconobacter oxydans (strain 621H) (Gluconobacter suboxydans).